A 149-amino-acid polypeptide reads, in one-letter code: Transcriptional repressor NrdR (149 aa).

The segment at 3 to 34 is a zinc-finger region; it reads CPFCCAVDTKVIDSRLVGEGSSVRRRRQCVVC. The 91-residue stretch at 49–139 folds into the ATP-cone domain; it reads PRVVKSNDVR…VYRSFEDIRE (91 aa).

Belongs to the NrdR family. It depends on Zn(2+) as a cofactor.

Negatively regulates transcription of bacterial ribonucleotide reductase nrd genes and operons by binding to NrdR-boxes. The chain is Transcriptional repressor NrdR from Erwinia tasmaniensis (strain DSM 17950 / CFBP 7177 / CIP 109463 / NCPPB 4357 / Et1/99).